Reading from the N-terminus, the 385-residue chain is MPDVIPADSVGIVTPQIAQFDTPLALSCGQSLSSYQLIYETYGTLNQSASNAILICHALSGDHHAAGYHAMSDSKPGWWDTAIGPGKAIDTNKFFVIALNNLGGCCGSTGPTSINPETGQRWEASFPIVTVEDWVESQARLADLLGIQTFAAIVGGSLGGMQVLEWSIRFPTRLQSAVIVASAPKLSTQNIAFNEVARQSIRRDPDFFDGNYIDNNSVPTNGLGLARMLGHITYLSDDAMGAKFGRQMRHDSYQYNYGIEFEVESYLRYQGEAFTKRFDANTYMLMTKALDYFDPASQTNGDLSAVLSRAQCEFLLVSFTTDWRFSPERSEEIVNALVKAGKSVSYAKIEATEGHDAFLFPIPRYMTVLNTFLTRVANRLTTEIK.

The AB hydrolase-1 domain occupies 51–359 (NAILICHALS…EATEGHDAFL (309 aa)). Ser157 functions as the Nucleophile in the catalytic mechanism. Arg227 is a substrate binding site. Active-site residues include Asp322 and His355. Asp356 is a binding site for substrate.

Belongs to the AB hydrolase superfamily. MetX family. As to quaternary structure, homodimer.

It is found in the cytoplasm. It carries out the reaction L-homoserine + succinyl-CoA = O-succinyl-L-homoserine + CoA. It functions in the pathway amino-acid biosynthesis; L-methionine biosynthesis via de novo pathway; O-succinyl-L-homoserine from L-homoserine: step 1/1. Functionally, transfers a succinyl group from succinyl-CoA to L-homoserine, forming succinyl-L-homoserine. The polypeptide is Homoserine O-succinyltransferase (Marinomonas sp. (strain MWYL1)).